The chain runs to 435 residues: Transcription activator AKTR-2 (435 aa).

Residues 16–43 (CDFCTQSKLRCNKNKPSCRRCTIQQQVC) constitute a DNA-binding region (zn(2)-C6 fungal-type). Residues 49-103 (RRTGRPPKHPRRADDSQETSGQHGHQDPMTSAPADSCEQQSSHLDLEGDDTDFTL) are disordered. Positions 50-59 (RTGRPPKHPR) are enriched in basic residues.

The protein resides in the nucleus. Transcription factor that regulates the expression of the gene clusters that mediate the biosynthesis of the host-selective toxins (HSTs) AK-toxins responsible for Japanese pear black spot disease by the Japanese pear pathotype. AK-toxins are esters of 9,10-epoxy 8-hydroxy 9-methyldecatrienoic acid (EDA). On cellular level, AK-toxins affect plasma membrane of susceptible cells and cause a sudden increase in loss of K(+) after a few minutes of toxin treatment. In Alternaria alternata (Alternaria rot fungus), this protein is Transcription activator AKTR-2.